The primary structure comprises 922 residues: Golgi-associated RAB2 interactor protein 5B (922 aa).

Disordered stretches follow at residues 244–264 (DVRK…DRTH), 292–317 (QSSP…SPSH), 373–404 (TPYS…KAPS), 424–597 (AVPA…TQET), 758–830 (QPES…LRPS), and 842–869 (ATAR…LATV). The segment covering 292–305 (QSSPKACTSASDEA) has biased composition (polar residues). Residues 431–441 (KPPPGLAPPQK) are compositionally biased toward pro residues. Low complexity-rich tracts occupy residues 442–458 (APAA…VPAP) and 471–495 (KAPA…ASAV). The segment covering 496–507 (PAPPQKTPPPSQ) has biased composition (pro residues). Residues 758-788 (QPESHTWVKEGKRPWGEMKEQPWGEMKEPPW) are compositionally biased toward basic and acidic residues.

It belongs to the GARIN family.

The sequence is that of Golgi-associated RAB2 interactor protein 5B from Homo sapiens (Human).